We begin with the raw amino-acid sequence, 291 residues long: Proteasome subunit beta (291 aa).

Positions 1–57 (MTWPLPDRLSINSLSGTPAVDLSSFTDFLRRQAPELLPASISGGAPLAGGDAQLPHG) are cleaved as a propeptide — removed in mature form; by autocatalysis. Catalysis depends on Thr-58, which acts as the Nucleophile.

Belongs to the peptidase T1B family. In terms of assembly, the 20S proteasome core is composed of 14 alpha and 14 beta subunits that assemble into four stacked heptameric rings, resulting in a barrel-shaped structure. The two inner rings, each composed of seven catalytic beta subunits, are sandwiched by two outer rings, each composed of seven alpha subunits. The catalytic chamber with the active sites is on the inside of the barrel. Has a gated structure, the ends of the cylinder being occluded by the N-termini of the alpha-subunits. Is capped by the proteasome-associated ATPase, ARC.

It is found in the cytoplasm. The catalysed reaction is Cleavage of peptide bonds with very broad specificity.. It participates in protein degradation; proteasomal Pup-dependent pathway. The formation of the proteasomal ATPase ARC-20S proteasome complex, likely via the docking of the C-termini of ARC into the intersubunit pockets in the alpha-rings, may trigger opening of the gate for substrate entry. Interconversion between the open-gate and close-gate conformations leads to a dynamic regulation of the 20S proteasome proteolysis activity. Component of the proteasome core, a large protease complex with broad specificity involved in protein degradation. The protein is Proteasome subunit beta of Mycobacterium tuberculosis (strain ATCC 25177 / H37Ra).